Reading from the N-terminus, the 207-residue chain is Serotonin N-acetyltransferase (207 aa).

A Phosphothreonine; by PKA modification is found at Thr-31. Residues 35–196 (NEFRCLTPKD…TFTEMHCSLR (162 aa)) enclose the N-acetyltransferase domain. Position 124 (Leu-124) interacts with substrate. Residues 124-126 (LAV) and 132-137 (QQGKGS) each bind acetyl-CoA. Met-159 contacts substrate. An acetyl-CoA-binding site is contributed by 168 to 170 (YQR). Ser-205 is subject to Phosphoserine.

The protein belongs to the acetyltransferase family. AANAT subfamily. Monomer. Interacts with several 14-3-3 proteins, including YWHAB, YWHAE, YWHAG and YWHAZ, preferentially when phosphorylated at Thr-31. Phosphorylation on Ser-205 also allows binding to YWHAZ, but with lower affinity. The interaction with YWHAZ considerably increases affinity for arylalkylamines and acetyl-CoA and protects the enzyme from dephosphorylation and proteasomal degradation. It may also prevent thiol-dependent inactivation. In terms of processing, cAMP-dependent phosphorylation on both N-terminal Thr-31 and C-terminal Ser-205 regulates AANAT activity by promoting interaction with 14-3-3 proteins. High levels in pineal gland and retina.

It localises to the cytoplasm. The enzyme catalyses a 2-arylethylamine + acetyl-CoA = an N-acetyl-2-arylethylamine + CoA + H(+). The protein operates within aromatic compound metabolism; melatonin biosynthesis; melatonin from serotonin: step 1/2. In terms of biological role, controls the night/day rhythm of melatonin production in the pineal gland. Catalyzes the N-acetylation of serotonin into N-acetylserotonin, the penultimate step in the synthesis of melatonin. This Bos taurus (Bovine) protein is Serotonin N-acetyltransferase (AANAT).